Reading from the N-terminus, the 411-residue chain is Dual-specificity RNA methyltransferase RlmN (411 aa).

Residue E125 is the Proton acceptor of the active site. Residues 131–380 (EEGRGTLCIS…IRTPRGRDIL (250 aa)) enclose the Radical SAM core domain. C138 and C383 are disulfide-bonded. [4Fe-4S] cluster-binding residues include C145, C149, and C152. S-adenosyl-L-methionine-binding positions include 209 to 210 (GE), S241, 263 to 265 (SLH), and N340. C383 (S-methylcysteine intermediate) is an active-site residue.

This sequence belongs to the radical SAM superfamily. RlmN family. The cofactor is [4Fe-4S] cluster.

It localises to the cytoplasm. It catalyses the reaction adenosine(2503) in 23S rRNA + 2 reduced [2Fe-2S]-[ferredoxin] + 2 S-adenosyl-L-methionine = 2-methyladenosine(2503) in 23S rRNA + 5'-deoxyadenosine + L-methionine + 2 oxidized [2Fe-2S]-[ferredoxin] + S-adenosyl-L-homocysteine. The enzyme catalyses adenosine(37) in tRNA + 2 reduced [2Fe-2S]-[ferredoxin] + 2 S-adenosyl-L-methionine = 2-methyladenosine(37) in tRNA + 5'-deoxyadenosine + L-methionine + 2 oxidized [2Fe-2S]-[ferredoxin] + S-adenosyl-L-homocysteine. Functionally, specifically methylates position 2 of adenine 2503 in 23S rRNA and position 2 of adenine 37 in tRNAs. m2A2503 modification seems to play a crucial role in the proofreading step occurring at the peptidyl transferase center and thus would serve to optimize ribosomal fidelity. This Brucella canis (strain ATCC 23365 / NCTC 10854 / RM-666) protein is Dual-specificity RNA methyltransferase RlmN.